A 142-amino-acid polypeptide reads, in one-letter code: FAD synthase (142 aa).

Residues 9–10 (VF), 14–17 (HLGH), Asp-93, and Tyr-120 contribute to the ATP site.

It belongs to the archaeal FAD synthase family. As to quaternary structure, homodimer. It depends on a divalent metal cation as a cofactor.

The catalysed reaction is FMN + ATP + H(+) = FAD + diphosphate. Its pathway is cofactor biosynthesis; FAD biosynthesis; FAD from FMN: step 1/1. In terms of biological role, catalyzes the transfer of the AMP portion of ATP to flavin mononucleotide (FMN) to produce flavin adenine dinucleotide (FAD) coenzyme. This chain is FAD synthase, found in Thermoplasma acidophilum (strain ATCC 25905 / DSM 1728 / JCM 9062 / NBRC 15155 / AMRC-C165).